A 330-amino-acid polypeptide reads, in one-letter code: Low affinity immunoglobulin gamma Fc region receptor II (330 aa).

A signal peptide spans 1–29 (MESNWTVHVFSRTLCHMLLWTAVLNLAAG). Over 30-210 (THDLPKAVVK…QGPKSSRSLP (181 aa)) the chain is Extracellular. Ig-like C2-type domains follow at residues 50-106 (EDTV…QTRL) and 131-189 (GETI…LGRT). Disulfide bonds link Cys57-Cys99 and Cys138-Cys182. 4 N-linked (GlcNAc...) asparagine glycosylation sites follow: Asn65, Asn92, Asn166, and Asn173. A helical membrane pass occupies residues 211-231 (VLTIVAAVTGIAVAAIVIILV). At 232 to 330 (SLVYLKKKQV…ETEHDYQNHI (99 aa)) the chain is on the cytoplasmic side. The disordered stretch occupies residues 261–330 (VGEYRQPSGG…ETEHDYQNHI (70 aa)). Tyr290 is modified (phosphotyrosine). Positions 307 to 312 (ITYSLL) match the ITIM motif motif. Phosphotyrosine; by SRC-type Tyr-kinases is present on Tyr309. Tyr326 is subject to Phosphotyrosine.

Interacts with FGR. Interacts with LYN. Post-translationally, glycosylated. When coaggregated to BCR, isoform IIB1 and isoform IIB1' become tyrosine phosphorylated and bind to the SH2 domains of the protein tyrosine phosphatase PTPC1. Phosphorylated by SRC-type Tyr-kinases such as LYN, BLK, FYN and SYK. Widely expressed by cells of hemopoietic origin. The isoforms are differentially expressed. Isoform IIB1 is preferentially expressed by cells of the lymphoid lineage, isoform IIB2 by cells of the myeloid lineage, and isoform IIB3 is released by macrophages and is present in the serum. Isoform IIB1' is expressed in myeloid and lymphoid cell lines, in normal spleen cells, and in resting or LPS-activated B-cells but is not detected in mesenteric lymph node cells.

The protein localises to the cell membrane. It is found in the cytoplasm. Its subcellular location is the cytoskeleton. The protein resides in the secreted. Receptor for the Fc region of complexed immunoglobulins gamma. Low affinity receptor. Involved in a variety of effector and regulatory functions such as phagocytosis of antigen-antibody complexes from the circulation and modulation of antibody production by B-cells. Isoform IIB1 and isoform IIB1' form caps but fail to mediate endocytosis or phagocytosis. Isoform IIB2 can mediate the endocytosis of soluble immune complexes via clathrin-coated pits. Isoform IIB1 and isoform IIB2 can down-regulate B-cell, T-cell, and mast cell activation when coaggregated to B-cell receptors for AG (BCR), T-cell receptors for AG (TCR), and Fc receptors, respectively. The protein is Low affinity immunoglobulin gamma Fc region receptor II (Fcgr2) of Mus musculus (Mouse).